The following is a 308-amino-acid chain: MRKLVVGSRRSKLALTQSQQFIDKLKAVEPNLEIEIKEIVTKGDRIVDKQLSKVGGKGLFVKEIQHELFEKNIDMAIHSLKDVPSVIPEGLTLGCIPDRELPFDAYISKTHTPLSQLPEGSIIGTSSLRRGAQILSKYPNLEIKWIRGNIDTRLEKLQTEDYDAIILAAAGLRRMGWSDDIVTSYLDRDTLLPAIGQGALGIECRSDDEELLTLLSKVHNDEVAKCVTAERTFLAEMDGSCQVPIAGYATISDQKEIEFTGLIMTPDGKERFEYTMNGTDPVELGKKVSNKLKEQGAYEIIKRLNEQH.

C241 is modified (S-(dipyrrolylmethanemethyl)cysteine).

Belongs to the HMBS family. As to quaternary structure, monomer. Requires dipyrromethane as cofactor.

The enzyme catalyses 4 porphobilinogen + H2O = hydroxymethylbilane + 4 NH4(+). Its pathway is porphyrin-containing compound metabolism; protoporphyrin-IX biosynthesis; coproporphyrinogen-III from 5-aminolevulinate: step 2/4. In terms of biological role, tetrapolymerization of the monopyrrole PBG into the hydroxymethylbilane pre-uroporphyrinogen in several discrete steps. The chain is Porphobilinogen deaminase from Staphylococcus aureus (strain MRSA252).